We begin with the raw amino-acid sequence, 260 residues long: 6-carboxyhexanoate--CoA ligase (260 aa).

Belongs to the BioW family. In terms of assembly, homodimer. Mg(2+) serves as cofactor.

The enzyme catalyses heptanedioate + ATP + CoA = 6-carboxyhexanoyl-CoA + AMP + diphosphate. Its pathway is metabolic intermediate metabolism; pimeloyl-CoA biosynthesis; pimeloyl-CoA from pimelate: step 1/1. In terms of biological role, catalyzes the transformation of pimelate into pimeloyl-CoA with concomitant hydrolysis of ATP to AMP. This chain is 6-carboxyhexanoate--CoA ligase, found in Fibrobacter succinogenes (strain ATCC 19169 / S85).